The sequence spans 293 residues: Phosphoribosylaminoimidazole-succinocarboxamide synthase (293 aa).

Belongs to the SAICAR synthetase family.

It carries out the reaction 5-amino-1-(5-phospho-D-ribosyl)imidazole-4-carboxylate + L-aspartate + ATP = (2S)-2-[5-amino-1-(5-phospho-beta-D-ribosyl)imidazole-4-carboxamido]succinate + ADP + phosphate + 2 H(+). The protein operates within purine metabolism; IMP biosynthesis via de novo pathway; 5-amino-1-(5-phospho-D-ribosyl)imidazole-4-carboxamide from 5-amino-1-(5-phospho-D-ribosyl)imidazole-4-carboxylate: step 1/2. This Bordetella parapertussis (strain 12822 / ATCC BAA-587 / NCTC 13253) protein is Phosphoribosylaminoimidazole-succinocarboxamide synthase.